Reading from the N-terminus, the 158-residue chain is S-ribosylhomocysteine lyase (158 aa).

His54, His58, and Cys124 together coordinate Fe cation.

It belongs to the LuxS family. Homodimer. Requires Fe cation as cofactor.

It catalyses the reaction S-(5-deoxy-D-ribos-5-yl)-L-homocysteine = (S)-4,5-dihydroxypentane-2,3-dione + L-homocysteine. In terms of biological role, involved in the synthesis of autoinducer 2 (AI-2) which is secreted by bacteria and is used to communicate both the cell density and the metabolic potential of the environment. The regulation of gene expression in response to changes in cell density is called quorum sensing. Catalyzes the transformation of S-ribosylhomocysteine (RHC) to homocysteine (HC) and 4,5-dihydroxy-2,3-pentadione (DPD). This Lactobacillus gasseri (strain ATCC 33323 / DSM 20243 / BCRC 14619 / CIP 102991 / JCM 1131 / KCTC 3163 / NCIMB 11718 / NCTC 13722 / AM63) protein is S-ribosylhomocysteine lyase.